A 355-amino-acid chain; its full sequence is Protein HGH1 homolog (355 aa).

Residues 324 to 355 (DEEGDPTPEEIEQMNKKQKLEDEDAQFETDEI) form a disordered region. 2 stretches are compositionally biased toward acidic residues: residues 325–335 (EEGDPTPEEIE) and 344–355 (EDEDAQFETDEI).

This sequence belongs to the HGH1 family.

The protein is Protein HGH1 homolog of Dictyostelium discoideum (Social amoeba).